Reading from the N-terminus, the 453-residue chain is GTPase Der (453 aa).

2 EngA-type G domains span residues P3–E178 and L190–S363. GTP-binding positions include G9–S16, D57–V61, N130–D133, G196–S203, D243–I247, and N308–D311. The KH-like domain maps to T364–H448.

This sequence belongs to the TRAFAC class TrmE-Era-EngA-EngB-Septin-like GTPase superfamily. EngA (Der) GTPase family. Associates with the 50S ribosomal subunit.

Functionally, GTPase that plays an essential role in the late steps of ribosome biogenesis. This chain is GTPase Der, found in Lawsonia intracellularis (strain PHE/MN1-00).